A 1038-amino-acid polypeptide reads, in one-letter code: Kinesin-like protein KIF17 (1038 aa).

Residues 5–335 (SVKVVVRCRP…LRYANRAKNI (331 aa)) enclose the Kinesin motor domain. Residue 91–98 (GQTGSGKS) participates in ATP binding. Residues 346 to 470 (KDALLREYQE…ETEAILKAEV (125 aa)) adopt a coiled-coil conformation. Disordered regions lie at residues 379 to 401 (TQTPPGPVQSEEKLLSPTTVQQD), 503 to 559 (LSMP…GPEE), and 636 to 657 (DSSQTVVPQIPKQPSSADLLEP). Composition is skewed to polar residues over residues 533 to 551 (SEFSFESNECSTLEDSATS) and 636 to 651 (DSSQTVVPQIPKQPSS). Residues 748–855 (QQVLARLQLL…QLEKIDYLAT (108 aa)) are a coiled coil. Disordered stretches follow at residues 916–940 (VVPTGTQNKPARKTSAVDSGEPHMQ) and 976–1038 (MKSL…GEPL). Residues 983–1000 (NSPPGLNSSLSNNSALPP) are compositionally biased toward low complexity.

The protein belongs to the TRAFAC class myosin-kinesin ATPase superfamily. Kinesin family. Homodimer. Interacts with APBA1 (via PDZ domain); the interaction is direct and is required for association of KIF17 with the cargo that is to be transported. Interacts with IFT B complex components IFT52 and IFT57. Interacts with IFT70B. Interacts with PIWIL1. Interacts with TBATA. In terms of tissue distribution, highly expressed in the gray matter of the brain, especially in the hippocampus.

The protein localises to the cytoplasm. Its subcellular location is the cytoskeleton. It is found in the cell projection. The protein resides in the cilium. It localises to the dendrite. Dendrite-specific motor protein which, in association with the Apba1-containing complex (LIN-10-LIN-2-LIN-7 complex), transports vesicles containing N-methyl-D-aspartate (NMDA) receptor subunit NR2B along microtubules. The sequence is that of Kinesin-like protein KIF17 (Kif17) from Mus musculus (Mouse).